The sequence spans 570 residues: Sulfite reductase [NADPH] hemoprotein beta-component (570 aa).

Residues Cys-434, Cys-440, Cys-479, and Cys-483 each coordinate [4Fe-4S] cluster. Cys-483 contacts siroheme.

This sequence belongs to the nitrite and sulfite reductase 4Fe-4S domain family. As to quaternary structure, alpha(8)-beta(8). The alpha component is a flavoprotein, the beta component is a hemoprotein. Siroheme serves as cofactor. The cofactor is [4Fe-4S] cluster.

It catalyses the reaction hydrogen sulfide + 3 NADP(+) + 3 H2O = sulfite + 3 NADPH + 4 H(+). Its pathway is sulfur metabolism; hydrogen sulfide biosynthesis; hydrogen sulfide from sulfite (NADPH route): step 1/1. Its function is as follows. Component of the sulfite reductase complex that catalyzes the 6-electron reduction of sulfite to sulfide. This is one of several activities required for the biosynthesis of L-cysteine from sulfate. The polypeptide is Sulfite reductase [NADPH] hemoprotein beta-component (cysI) (Escherichia coli (strain K12)).